Consider the following 443-residue polypeptide: Glycerol-3-phosphate acyltransferase 3-like (443 aa).

The next 3 membrane-spanning stretches (helical) occupy residues 15 to 35, 146 to 166, and 170 to 190; these read WFSC…SLGI, ISLR…CILL, and ITLT…VGFL. The HXXXXD motif signature appears at 238–243; it reads HTSPID. Residues 358-378 form a helical membrane-spanning segment; it reads IMSYLLRMMTSWAIVCNVWYL.

It belongs to the 1-acyl-sn-glycerol-3-phosphate acyltransferase family.

Its subcellular location is the endoplasmic reticulum membrane. It carries out the reaction sn-glycerol 3-phosphate + an acyl-CoA = a 1-acyl-sn-glycero-3-phosphate + CoA. The enzyme catalyses a 1-acyl-sn-glycero-3-phosphate + an acyl-CoA = a 1,2-diacyl-sn-glycero-3-phosphate + CoA. It participates in glycerolipid metabolism; triacylglycerol biosynthesis. The protein operates within phospholipid metabolism; CDP-diacylglycerol biosynthesis; CDP-diacylglycerol from sn-glycerol 3-phosphate: step 1/3. Its function is as follows. May transfer the acyl-group from acyl-coA to the sn-1 position of glycerol-3-phosphate, an essential step in glycerolipid biosynthesis. Also transfers the acyl-group from acyl-coA to the sn-2 position of 1-acyl-sn-glycerol-3-phosphate (lysophosphatidic acid, or LPA), forming 1,2-diacyl-sn-glycerol-3-phosphate (phosphatidic acid, or PA). This is Glycerol-3-phosphate acyltransferase 3-like (agpat9l) from Danio rerio (Zebrafish).